Consider the following 289-residue polypeptide: 33 kDa chaperonin (289 aa).

2 disulfide bridges follow: C237-C239 and C270-C273.

Belongs to the HSP33 family. Under oxidizing conditions two disulfide bonds are formed involving the reactive cysteines. Under reducing conditions zinc is bound to the reactive cysteines and the protein is inactive.

The protein localises to the cytoplasm. Redox regulated molecular chaperone. Protects both thermally unfolding and oxidatively damaged proteins from irreversible aggregation. Plays an important role in the bacterial defense system toward oxidative stress. The protein is 33 kDa chaperonin of Oceanobacillus iheyensis (strain DSM 14371 / CIP 107618 / JCM 11309 / KCTC 3954 / HTE831).